The primary structure comprises 655 residues: Probable replication restart protein PriA (655 aa).

Zn(2+) is bound by residues cysteine 368, cysteine 371, cysteine 377, cysteine 380, cysteine 396, cysteine 399, cysteine 408, and cysteine 411.

Belongs to the helicase family. PriA subfamily. In terms of assembly, component of the replication restart primosome. The cofactor is Zn(2+).

Initiates the restart of stalled replication forks, which reloads the replicative helicase on sites other than the origin of replication. Recognizes and binds to abandoned replication forks and remodels them to uncover a helicase loading site. Promotes assembly of the primosome at these replication forks. The protein is Probable replication restart protein PriA of Mycobacterium bovis (strain ATCC BAA-935 / AF2122/97).